Here is a 358-residue protein sequence, read N- to C-terminus: Transcriptional repressor protein KorB (358 aa).

Over residues 1–42 (MTAAQAKTTKKNTAAAAQEAAGAAQPSGLGLDSIGDLSSLLD) the composition is skewed to low complexity. Disordered regions lie at residues 1-79 (MTAA…FSPE) and 256-305 (DPNT…DKLK). Positions 275–285 (AGDGQDGEDGD) are enriched in acidic residues. Basic and acidic residues predominate over residues 286–305 (QDGKDAKEKGAKEPDPDKLK).

The protein belongs to the ParB family.

Its function is as follows. In conjunction with KorA, inhibits the transcription of the kilA, trfA and korAB operons. Is also involved in the negative control of the kilB operon. The protein is Transcriptional repressor protein KorB (korB) of Escherichia coli.